A 279-amino-acid chain; its full sequence is Methylthioribulose-1-phosphate dehydratase (279 aa).

Residue C132 participates in substrate binding. The Zn(2+) site is built by H150 and H152. E175 serves as the catalytic Proton donor/acceptor. H240 contributes to the Zn(2+) binding site.

The protein belongs to the aldolase class II family. MtnB subfamily. Zn(2+) is required as a cofactor.

It localises to the cytoplasm. The enzyme catalyses 5-(methylsulfanyl)-D-ribulose 1-phosphate = 5-methylsulfanyl-2,3-dioxopentyl phosphate + H2O. It participates in amino-acid biosynthesis; L-methionine biosynthesis via salvage pathway; L-methionine from S-methyl-5-thio-alpha-D-ribose 1-phosphate: step 2/6. Its function is as follows. Catalyzes the dehydration of methylthioribulose-1-phosphate (MTRu-1-P) into 2,3-diketo-5-methylthiopentyl-1-phosphate (DK-MTP-1-P). In Candida tropicalis (strain ATCC MYA-3404 / T1) (Yeast), this protein is Methylthioribulose-1-phosphate dehydratase.